The sequence spans 367 residues: Prenyltransferase idtC (367 aa).

The N-terminal stretch at Met-1–Ala-22 is a signal peptide. Residues Thr-32–Thr-42 are compositionally biased toward low complexity. The segment at Thr-32 to Asn-84 is disordered. Asn-67 carries an N-linked (GlcNAc...) asparagine glycan. The span at Lys-70 to Lys-82 shows a compositional bias: basic and acidic residues. His-132 is a binding site for substrate. Asp-139 and Asp-143 together coordinate Mg(2+). A substrate-binding site is contributed by Arg-148. An N-linked (GlcNAc...) asparagine glycan is attached at Asn-150. Substrate is bound by residues Lys-233, Thr-234, Gln-264, Asn-271, and Lys-281.

Belongs to the FPP/GGPP synthase family. It depends on Mg(2+) as a cofactor.

Its pathway is secondary metabolite biosynthesis. Functionally, prenyltransferase; part of the gene cluster that mediates the biosynthesis of paspalitrems, indole-diterpene (IDT) mycotoxins that are potent tremorgens in mammals. The geranylgeranyl diphosphate (GGPP) synthase idtG is proposed to catalyze the first step in IDT biosynthesis via catalysis of a series of iterative condensations of isopentenyl diphosphate (IPP) with dimethylallyl diphosphate (DMAPP), geranyl diphosphate (GPP), and farnesyl diphosphate (FPP), to form GGPP. Condensation of indole-3-glycerol phosphate with GGPP by the prenyltransferase idtC then forms 3-geranylgeranylindole (3-GGI). Epoxidation of the two terminal alkenes of the geranylgeranyl moiety by the FAD-dependent monooxygenase idtM, and cyclization by the terpene cyclase idtB then leads to the production of paspaline. The cytochrome P450 monooxygenase idtP then catalyzes oxidative elimination of the pendant methyl group at C-12 of paspaline and generates the C-10 ketone to yield 13-desoxypaxilline. The cytochrome P450 monooxygenase idtQ may catalyze the C-13 oxidation of 13-desoxypaxilline to afford paxilline. Considering that both paspalicine and paxilline were detected in C.paspali, idtQ also catalyzes the formation of paspalinine from 13-desoxypaxilline via paspalicine as an intermediate. Finally, the alpha-prenyltransferase idtF prenylates paspalinine at the C-20 or the C-21 positions to yield paspalitrems A and C, respectively. The hydroxylation of paspalitrem A at C-32 by a still unknown oxidase affords paspalitrem B. The sequence is that of Prenyltransferase idtC from Claviceps paspali (Rye ergot fungus).